The primary structure comprises 273 residues: Medium-wave-sensitive opsin 1 (273 aa).

Topologically, residues 1–5 (APRWV) are extracellular. A helical membrane pass occupies residues 6 to 30 (YHLTSAWMVFVVIASVFTNGLVLAA). The Cytoplasmic portion of the chain corresponds to 31-42 (TMRFKKLRHPLN). A helical transmembrane segment spans residues 43 to 68 (WILVNLAIADLVETIIASTISVVNQM). Topologically, residues 69–82 (YGYFVLGHPLCVVE) are extracellular. C79 and C156 form a disulfide bridge. Residues 83 to 102 (GYTASLCGITGLWSLAIISW) form a helical membrane-spanning segment. Over 103 to 121 (ERWMVVCRPFGNVRFDAKL) the chain is Cytoplasmic. A helical membrane pass occupies residues 122-145 (AIAGIAFSWIWAAVWTAPPIFGWS). The Extracellular portion of the chain corresponds to 146 to 171 (RYWPHGLKTSCGPDVFSGSSYPGVQS). Residues 172–199 (YMIVLMITCCFIPLSVIVLCYLQVWLAI) form a helical membrane-spanning segment. Over 200–221 (RAVAKQQKESESTQKAEKEVTR) the chain is Cytoplasmic. A helical transmembrane segment spans residues 222–245 (MVMVMIFAFCLCWGPYAFFACFAA). At 246-253 (AHPGYAFH) the chain is on the extracellular side. A helical membrane pass occupies residues 254–273 (PLVAALPAYFAKSATIYNPI). Residue K265 is modified to N6-(retinylidene)lysine.

This sequence belongs to the G-protein coupled receptor 1 family. Opsin subfamily. As to quaternary structure, monomer. Homodimer. Homotetramer. O-glycosylated. In terms of processing, phosphorylated on some or all of the serine and threonine residues present in the C-terminal region. In terms of tissue distribution, the three color pigments are found in the cone photoreceptor cells.

The protein resides in the membrane. Its function is as follows. Visual pigments are the light-absorbing molecules that mediate vision. They consist of an apoprotein, opsin, covalently linked to cis-retinal. This Odocoileus virginianus virginianus (Virginia white-tailed deer) protein is Medium-wave-sensitive opsin 1 (OPN1MW).